Reading from the N-terminus, the 591-residue chain is Probable translation initiation factor IF-2 (591 aa).

Residues Leu7 to Glu223 form the tr-type G domain. The tract at residues Gly16–Thr23 is G1. Gly16–Thr23 provides a ligand contact to GTP. Residues Ala41–His45 form a G2 region. The G3 stretch occupies residues Asp78–Gly81. GTP is bound by residues Asp78–His82 and Asn132–Asp135. Residues Asn132–Asp135 are G4. The interval Ser200–Met202 is G5.

This sequence belongs to the TRAFAC class translation factor GTPase superfamily. Classic translation factor GTPase family. IF-2 subfamily.

In terms of biological role, function in general translation initiation by promoting the binding of the formylmethionine-tRNA to ribosomes. Seems to function along with eIF-2. The sequence is that of Probable translation initiation factor IF-2 from Methanosarcina barkeri (strain Fusaro / DSM 804).